The sequence spans 135 residues: Sex-regulated protein janus-A (135 aa).

Substrate is bound at residue lysine 37. Histidine 63 serves as the catalytic Proton acceptor. Serine 104–glycine 106 is a substrate binding site.

Belongs to the janus family.

In terms of biological role, janA and janB regulate somatic sex differentiation. This chain is Sex-regulated protein janus-A (janA), found in Drosophila erecta (Fruit fly).